We begin with the raw amino-acid sequence, 361 residues long: D-alanine--D-alanine ligase (361 aa).

Residues 134–344 (KLLLKSFDIP…FKDLVDNLID (211 aa)) enclose the ATP-grasp domain. 167-222 (KEVLGYPVIVKPAVLGSSIGINVAYSENQIESFIKEALKYDLTIVIEKFIEAREIE) is an ATP binding site. Mg(2+)-binding residues include D297, E311, and N313.

This sequence belongs to the D-alanine--D-alanine ligase family. It depends on Mg(2+) as a cofactor. The cofactor is Mn(2+).

It localises to the cytoplasm. It catalyses the reaction 2 D-alanine + ATP = D-alanyl-D-alanine + ADP + phosphate + H(+). Its pathway is cell wall biogenesis; peptidoglycan biosynthesis. Functionally, cell wall formation. In Borreliella burgdorferi (strain ATCC 35210 / DSM 4680 / CIP 102532 / B31) (Borrelia burgdorferi), this protein is D-alanine--D-alanine ligase.